Reading from the N-terminus, the 62-residue chain is Large ribosomal subunit protein bL28 (62 aa).

A disordered region spans residues 1–27 (MAKECVITGRKSRSGNKRSHAMNSSKR). Residues 10–20 (RKSRSGNKRSH) are compositionally biased toward basic residues.

It belongs to the bacterial ribosomal protein bL28 family.

In Listeria innocua serovar 6a (strain ATCC BAA-680 / CLIP 11262), this protein is Large ribosomal subunit protein bL28.